The following is a 313-amino-acid chain: Tyrosine recombinase XerD (313 aa).

A Core-binding (CB) domain is found at 17 to 102 (EDNDVIIEQF…TLRRFFQYLY (86 aa)). The Tyr recombinase domain occupies 123-307 (RLPKDLSEQQ…ATERLKVLHQ (185 aa)). Catalysis depends on residues Arg-163, Lys-187, His-259, Arg-262, and His-285. The active-site O-(3'-phospho-DNA)-tyrosine intermediate is Tyr-294.

It belongs to the 'phage' integrase family. XerD subfamily. As to quaternary structure, forms a cyclic heterotetrameric complex composed of two molecules of XerC and two molecules of XerD, in which XerC interacts with XerD via its C-terminal region, XerD interacts with XerC via its C-terminal region and so on.

The protein localises to the cytoplasm. Its activity is regulated as follows. FtsK may regulate the catalytic switch between XerC and XerD in the heterotetrameric complex during the two steps of the recombination process. Site-specific tyrosine recombinase, which acts by catalyzing the cutting and rejoining of the recombining DNA molecules. Binds cooperatively to specific DNA consensus sequences that are separated from XerC binding sites by a short central region, forming the heterotetrameric XerC-XerD complex that recombines DNA substrates. The complex is essential to convert dimers of the bacterial chromosome into monomers to permit their segregation at cell division. It also contributes to the segregational stability of plasmids. In the complex XerD specifically exchanges the bottom DNA strands. This Proteus mirabilis protein is Tyrosine recombinase XerD.